Here is a 68-residue protein sequence, read N- to C-terminus: uncharacterized protein (68 aa).

A disordered region spans residues 1–42 (MHLCQNGHYYKPHRASAEKVPYLKKKKKNSRNEGKAKKKNEK).

This is an uncharacterized protein from Saccharomyces cerevisiae (strain ATCC 204508 / S288c) (Baker's yeast).